The chain runs to 288 residues: Acetyl-coenzyme A carboxylase carboxyl transferase subunit beta (288 aa).

Residues Leu34–Gln288 form the CoA carboxyltransferase N-terminal domain. Residues Cys38, Cys41, Cys56, and Cys59 each coordinate Zn(2+). A C4-type zinc finger spans residues Cys38–Cys59.

This sequence belongs to the AccD/PCCB family. As to quaternary structure, acetyl-CoA carboxylase is a heterohexamer composed of biotin carboxyl carrier protein (AccB), biotin carboxylase (AccC) and two subunits each of ACCase subunit alpha (AccA) and ACCase subunit beta (AccD). Requires Zn(2+) as cofactor.

Its subcellular location is the cytoplasm. It carries out the reaction N(6)-carboxybiotinyl-L-lysyl-[protein] + acetyl-CoA = N(6)-biotinyl-L-lysyl-[protein] + malonyl-CoA. The protein operates within lipid metabolism; malonyl-CoA biosynthesis; malonyl-CoA from acetyl-CoA: step 1/1. Its function is as follows. Component of the acetyl coenzyme A carboxylase (ACC) complex. Biotin carboxylase (BC) catalyzes the carboxylation of biotin on its carrier protein (BCCP) and then the CO(2) group is transferred by the transcarboxylase to acetyl-CoA to form malonyl-CoA. This is Acetyl-coenzyme A carboxylase carboxyl transferase subunit beta from Streptococcus thermophilus (strain ATCC BAA-491 / LMD-9).